The sequence spans 413 residues: SWIRM domain-containing protein FUN19 (413 aa).

Low complexity predominate over residues 35–51 (KASNNNNDSNKNGLNMS). 3 disordered regions span residues 35-55 (KASN…DYSN), 189-211 (YNDD…PLAS), and 249-271 (YSPQ…PSAS). Thr-194 carries the phosphothreonine modification. Over residues 200–211 (SSSSRLPSPLAS) the composition is skewed to low complexity. Ser-207 and Ser-211 each carry phosphoserine. Residues 316–413 (LKIEWKGSPM…LQDSNFTKYL (98 aa)) enclose the SWIRM domain.

In Saccharomyces cerevisiae (strain ATCC 204508 / S288c) (Baker's yeast), this protein is SWIRM domain-containing protein FUN19 (FUN19).